The chain runs to 430 residues: Signal recognition particle receptor FtsY (430 aa).

Residues 75-95 form a disordered region; the sequence is DTGELPAVGDDATVPRDSPRH. GTP is bound by residues 238–245, 320–324, and 382–385; these read GVNGTGKT, DTAGR, and TKLD.

It belongs to the GTP-binding SRP family. FtsY subfamily. In terms of assembly, part of the signal recognition particle protein translocation system, which is composed of SRP and FtsY.

Its subcellular location is the cell membrane. It localises to the cytoplasm. The enzyme catalyses GTP + H2O = GDP + phosphate + H(+). Its function is as follows. Involved in targeting and insertion of nascent membrane proteins into the cytoplasmic membrane. Acts as a receptor for the complex formed by the signal recognition particle (SRP) and the ribosome-nascent chain (RNC). The polypeptide is Signal recognition particle receptor FtsY (Mycobacterium leprae (strain TN)).